A 515-amino-acid polypeptide reads, in one-letter code: MEELQGYLEEDRSRQQQFLYPLLFQEYIYVFAYDHGLNSSIFYEPQNSLGYDNKFSSVLVKRLIIRMYQKNYLIYSVNDIYQNIFVGHNNYFYFNFFSQILSEGFAVIVEIPFSLQLISSLEEKEIPKSHNLQSSHSIFPFLEDKLLHLNYLSDILIPYPVHMEILVQMLQSWIQDVLSLHLLQFFLHEYYNWNSLIIPKKSIYVFSKENKRLFWFLYNLYIYEYEFLLVFPCKQSSFLRLISSGVLLERIHFYVKIEHLGVCRIFCQKTLWIFKDPFIHYIRYQGKSILGSRGTHFLMKKWKYHLVNFWQYYFHFWSQPYRIDIKKLSNYSFYFLGYFSSVQINSSMVRNQMLENSFLMYTLTKKFDTIIPIIPLIRSLSKAQFCTVSGYPISKPIWTDLADCDIINRFGRICRKLSHYYSGSSKKQSLYRMKYILRLSCARTLARKHKSSARSFLQRLSSGLLEEFFTEEEQVIFLIFPKIISFYLYGSYRERIWYLDIIRINDLVNCLLVTT.

Belongs to the intron maturase 2 family. MatK subfamily.

It is found in the plastid. It localises to the chloroplast. Functionally, usually encoded in the trnK tRNA gene intron. Probably assists in splicing its own and other chloroplast group II introns. The chain is Maturase K from Zingiber mioga (Myoga ginger).